Reading from the N-terminus, the 132-residue chain is Large ribosomal subunit protein bL12 (132 aa).

Positions 100 to 126 are enriched in basic and acidic residues; it reads ESTPKPVKEGASKEDAEAAKKELEEAG. Residues 100-132 are disordered; that stretch reads ESTPKPVKEGASKEDAEAAKKELEEAGAKVSIK.

This sequence belongs to the bacterial ribosomal protein bL12 family. As to quaternary structure, homodimer. Part of the ribosomal stalk of the 50S ribosomal subunit. Forms a multimeric L10(L12)X complex, where L10 forms an elongated spine to which 2 to 4 L12 dimers bind in a sequential fashion. Binds GTP-bound translation factors.

Forms part of the ribosomal stalk which helps the ribosome interact with GTP-bound translation factors. Is thus essential for accurate translation. The chain is Large ribosomal subunit protein bL12 from Thermosynechococcus vestitus (strain NIES-2133 / IAM M-273 / BP-1).